We begin with the raw amino-acid sequence, 521 residues long: 2,3-bisphosphoglycerate-independent phosphoglycerate mutase (521 aa).

Mn(2+)-binding residues include Asp-18 and Ser-68. The active-site Phosphoserine intermediate is Ser-68. Residues His-129, Arg-158–Asp-159, Arg-190, Arg-196, Arg-266–Arg-269, and Lys-343 contribute to the substrate site. Residues Asp-410, His-414, Asp-451, His-452, and His-470 each contribute to the Mn(2+) site.

The protein belongs to the BPG-independent phosphoglycerate mutase family. Monomer. Mn(2+) serves as cofactor.

It carries out the reaction (2R)-2-phosphoglycerate = (2R)-3-phosphoglycerate. Its pathway is carbohydrate degradation; glycolysis; pyruvate from D-glyceraldehyde 3-phosphate: step 3/5. Catalyzes the interconversion of 2-phosphoglycerate and 3-phosphoglycerate. This is 2,3-bisphosphoglycerate-independent phosphoglycerate mutase from Hydrogenovibrio crunogenus (strain DSM 25203 / XCL-2) (Thiomicrospira crunogena).